We begin with the raw amino-acid sequence, 350 residues long: Probable L-aspartate decarboxylase (350 aa).

Lysine 206 carries the post-translational modification N6-(pyridoxal phosphate)lysine.

Belongs to the group II decarboxylase family. MfnA subfamily. Pyridoxal 5'-phosphate serves as cofactor.

It catalyses the reaction L-aspartate + H(+) = beta-alanine + CO2. It participates in cofactor biosynthesis; coenzyme A biosynthesis. Functionally, catalyzes the decarboxylation of L-aspartate to produce beta-alanine. The sequence is that of Probable L-aspartate decarboxylase from Haloarcula marismortui (strain ATCC 43049 / DSM 3752 / JCM 8966 / VKM B-1809) (Halobacterium marismortui).